The sequence spans 195 residues: Holliday junction branch migration complex subunit RuvA (195 aa).

The domain I stretch occupies residues 1–61 (MYEYFEGIIS…DTGITLYGFQ (61 aa)). The domain II stretch occupies residues 62–140 (DQDDKGLFLK…DYVARLDKPE (79 aa)). The segment at 141 to 146 (NGEEIS) is flexible linker. Residues 146 to 195 (SPALNDALLALIALGYTQKEVDRITPKLVEIEADTADQYIKKGLALLLKK) are domain III.

This sequence belongs to the RuvA family. Homotetramer. Forms an RuvA(8)-RuvB(12)-Holliday junction (HJ) complex. HJ DNA is sandwiched between 2 RuvA tetramers; dsDNA enters through RuvA and exits via RuvB. An RuvB hexamer assembles on each DNA strand where it exits the tetramer. Each RuvB hexamer is contacted by two RuvA subunits (via domain III) on 2 adjacent RuvB subunits; this complex drives branch migration. In the full resolvosome a probable DNA-RuvA(4)-RuvB(12)-RuvC(2) complex forms which resolves the HJ.

The protein resides in the cytoplasm. Functionally, the RuvA-RuvB-RuvC complex processes Holliday junction (HJ) DNA during genetic recombination and DNA repair, while the RuvA-RuvB complex plays an important role in the rescue of blocked DNA replication forks via replication fork reversal (RFR). RuvA specifically binds to HJ cruciform DNA, conferring on it an open structure. The RuvB hexamer acts as an ATP-dependent pump, pulling dsDNA into and through the RuvAB complex. HJ branch migration allows RuvC to scan DNA until it finds its consensus sequence, where it cleaves and resolves the cruciform DNA. This chain is Holliday junction branch migration complex subunit RuvA, found in Lactobacillus acidophilus (strain ATCC 700396 / NCK56 / N2 / NCFM).